The following is an 889-amino-acid chain: Alanine--tRNA ligase (889 aa).

Residues His-569, His-573, Cys-671, and His-675 each contribute to the Zn(2+) site.

The protein belongs to the class-II aminoacyl-tRNA synthetase family. Zn(2+) is required as a cofactor.

Its subcellular location is the cytoplasm. It carries out the reaction tRNA(Ala) + L-alanine + ATP = L-alanyl-tRNA(Ala) + AMP + diphosphate. Its function is as follows. Catalyzes the attachment of alanine to tRNA(Ala) in a two-step reaction: alanine is first activated by ATP to form Ala-AMP and then transferred to the acceptor end of tRNA(Ala). Also edits incorrectly charged Ser-tRNA(Ala) and Gly-tRNA(Ala) via its editing domain. This chain is Alanine--tRNA ligase, found in Synechococcus sp. (strain CC9605).